Reading from the N-terminus, the 301-residue chain is Nucleotide-binding protein Rfer_1653 (301 aa).

15 to 22 (GMSGSGKS) is an ATP binding site. 64 to 67 (DVRT) contributes to the GTP binding site.

It belongs to the RapZ-like family.

Its function is as follows. Displays ATPase and GTPase activities. This Albidiferax ferrireducens (strain ATCC BAA-621 / DSM 15236 / T118) (Rhodoferax ferrireducens) protein is Nucleotide-binding protein Rfer_1653.